We begin with the raw amino-acid sequence, 415 residues long: Procollagen C-endopeptidase enhancer 2 (415 aa).

The N-terminal stretch at 1-23 is a signal peptide; it reads MRGANAWAPLCLLLAAATQLSRQ. Disulfide bonds link cysteine 33–cysteine 59, cysteine 86–cysteine 107, cysteine 154–cysteine 181, cysteine 208–cysteine 231, cysteine 297–cysteine 364, cysteine 301–cysteine 367, and cysteine 312–cysteine 415. 2 CUB domains span residues 33-144 and 154-268; these read CGGI…FSAA and CGGL…YIFR. In terms of domain architecture, NTR spans 297 to 415; the sequence is CQQKCRRTGT…LLDALKNKQC (119 aa). Asparagine 355 is a glycosylation site (N-linked (GlcNAc...) asparagine).

In terms of assembly, interacts with heparin with high affinity, and type I or II collagen. In terms of processing, O-glycosylated; contains sialic acid. In terms of tissue distribution, highly expressed in the heart, trabecular meshwork, pituitary gland, bladder, mammary gland, trachea and placenta and weakly expressed in the brain. Expressed in cartilage.

It localises to the secreted. Its function is as follows. Binds to the C-terminal propeptide of types I and II procollagens and may enhance the cleavage of that propeptide by BMP1. The polypeptide is Procollagen C-endopeptidase enhancer 2 (PCOLCE2) (Homo sapiens (Human)).